The chain runs to 350 residues: MPVLHNRISNDALKARMLAETEPRTTISFYKYFTIVDPQSTRDALYQMFTSLNVFGRVYLAREGINAQISVPQSQVAAFREQLYAFDPALNGLRLNIALDDDGKSFWVLRMKVRERIVADGIDDPNFDASDVGEYLKAAEVNAMLDDPDAVFIDMRNHYEYEVGHFENALEIPADTFREQLPKAVEMMQEHRDKKIVMYCTGGIRCEKASAWMKHNGFNKVWHIEGGIIEYARKAREQGLPVRFIGKNFVFDERMGERISDEVIAHCHQCGAPCDSHTNCKNDGCHLLFIQCPACAEKFKGCCSELCCEESSLPEEEQRRRRAGRENGNKIFNKSRGRLNTQLGIPDPAE.

The Rhodanese domain maps to 146–240 (DDPDAVFIDM…YARKAREQGL (95 aa)). The active-site Cysteine persulfide intermediate is the C200. Residues 314–350 (PEEEQRRRRAGRENGNKIFNKSRGRLNTQLGIPDPAE) form a disordered region. A compositionally biased stretch (basic and acidic residues) spans 316–328 (EEQRRRRAGRENG).

This sequence belongs to the TrhO family.

The enzyme catalyses uridine(34) in tRNA + AH2 + O2 = 5-hydroxyuridine(34) in tRNA + A + H2O. Its function is as follows. Catalyzes oxygen-dependent 5-hydroxyuridine (ho5U) modification at position 34 in tRNAs. This chain is tRNA uridine(34) hydroxylase, found in Citrobacter koseri (strain ATCC BAA-895 / CDC 4225-83 / SGSC4696).